The sequence spans 227 residues: Probable septum site-determining protein MinC (227 aa).

Belongs to the MinC family. Interacts with MinD and FtsZ.

In terms of biological role, cell division inhibitor that blocks the formation of polar Z ring septums. Rapidly oscillates between the poles of the cell to destabilize FtsZ filaments that have formed before they mature into polar Z rings. Prevents FtsZ polymerization. This Geobacillus thermodenitrificans (strain NG80-2) protein is Probable septum site-determining protein MinC.